We begin with the raw amino-acid sequence, 383 residues long: Succinyl-diaminopimelate desuccinylase (383 aa).

H73 lines the Zn(2+) pocket. D75 is a catalytic residue. D107 is a binding site for Zn(2+). E141 acts as the Proton acceptor in catalysis. 3 residues coordinate Zn(2+): E142, E170, and H356.

Belongs to the peptidase M20A family. DapE subfamily. As to quaternary structure, homodimer. Zn(2+) serves as cofactor. Co(2+) is required as a cofactor.

The enzyme catalyses N-succinyl-(2S,6S)-2,6-diaminopimelate + H2O = (2S,6S)-2,6-diaminopimelate + succinate. Its pathway is amino-acid biosynthesis; L-lysine biosynthesis via DAP pathway; LL-2,6-diaminopimelate from (S)-tetrahydrodipicolinate (succinylase route): step 3/3. Functionally, catalyzes the hydrolysis of N-succinyl-L,L-diaminopimelic acid (SDAP), forming succinate and LL-2,6-diaminopimelate (DAP), an intermediate involved in the bacterial biosynthesis of lysine and meso-diaminopimelic acid, an essential component of bacterial cell walls. This is Succinyl-diaminopimelate desuccinylase from Pseudomonas putida (strain W619).